Reading from the N-terminus, the 264-residue chain is Acyl-[acyl-carrier-protein]--UDP-N-acetylglucosamine O-acyltransferase (264 aa).

Belongs to the transferase hexapeptide repeat family. LpxA subfamily. Homotrimer.

The protein localises to the cytoplasm. It catalyses the reaction a (3R)-hydroxyacyl-[ACP] + UDP-N-acetyl-alpha-D-glucosamine = a UDP-3-O-[(3R)-3-hydroxyacyl]-N-acetyl-alpha-D-glucosamine + holo-[ACP]. Its pathway is glycolipid biosynthesis; lipid IV(A) biosynthesis; lipid IV(A) from (3R)-3-hydroxytetradecanoyl-[acyl-carrier-protein] and UDP-N-acetyl-alpha-D-glucosamine: step 1/6. Its function is as follows. Involved in the biosynthesis of lipid A, a phosphorylated glycolipid that anchors the lipopolysaccharide to the outer membrane of the cell. This is Acyl-[acyl-carrier-protein]--UDP-N-acetylglucosamine O-acyltransferase from Haemophilus ducreyi (strain 35000HP / ATCC 700724).